A 583-amino-acid polypeptide reads, in one-letter code: Scarecrow-like protein 30 (583 aa).

2 disordered regions span residues 107-154 (GDLE…RKSK) and 182-205 (EATE…KSDQ). Over residues 115-124 (GNFSSITSLH) the composition is skewed to polar residues. Basic and acidic residues predominate over residues 131–140 (ESTRRYRHRD). A GRAS domain is found at 200 to 579 (QQKSDQPVDM…RVLYAVSCWK (380 aa)). The segment at 207–266 (VDMRNLLMQCAQAVASFDQRRAFEKLKEIREHSSRHGDATQRLGYHFAEALEARITGTMT) is leucine repeat I (LRI). The tract at residues 285-350 (YKGFVQACPT…IGPPLLRVTG (66 aa)) is VHIID. A VHIID motif is present at residues 316–320 (LHIID). The tract at residues 366 to 398 (ETGRRLKRFCDKFNVPFEYSFIAKNWENITLDD) is leucine repeat II (LRII). Residues 407-501 (TVVNCILRLQ…RELIIRDAMS (95 aa)) are PFYRE. Residues 504-579 (ACEGSERFAR…RVLYAVSCWK (76 aa)) form an SAW region.

This sequence belongs to the GRAS family. As to quaternary structure, interacts with SNRNP35 and CYP95. As to expression, expressed in seedlings, leaves, sepals, stamen and pistil, and in the quiescent center of root meristem.

The protein localises to the nucleus. Functionally, probable transcription factor involved in plant development. In Arabidopsis thaliana (Mouse-ear cress), this protein is Scarecrow-like protein 30 (SCL30).